Reading from the N-terminus, the 627-residue chain is uncharacterized protein (627 aa).

2 disordered regions span residues 141 to 187 (LRYP…TPPS) and 490 to 510 (ENEN…GPRT). Residues 491 to 510 (NENTNGSANNSTYTNGGPRT) show a composition bias toward polar residues. Residue S559 is modified to Phosphoserine.

This is an uncharacterized protein from Saccharomyces cerevisiae (strain ATCC 204508 / S288c) (Baker's yeast).